Reading from the N-terminus, the 321-residue chain is Lipoyl synthase (321 aa).

Cys68, Cys73, Cys79, Cys94, Cys98, Cys101, and Ser308 together coordinate [4Fe-4S] cluster. The Radical SAM core domain occupies 80–297 (FNHGTATFMI…KAYADEIGFT (218 aa)).

Belongs to the radical SAM superfamily. Lipoyl synthase family. Requires [4Fe-4S] cluster as cofactor.

It localises to the cytoplasm. The enzyme catalyses [[Fe-S] cluster scaffold protein carrying a second [4Fe-4S](2+) cluster] + N(6)-octanoyl-L-lysyl-[protein] + 2 oxidized [2Fe-2S]-[ferredoxin] + 2 S-adenosyl-L-methionine + 4 H(+) = [[Fe-S] cluster scaffold protein] + N(6)-[(R)-dihydrolipoyl]-L-lysyl-[protein] + 4 Fe(3+) + 2 hydrogen sulfide + 2 5'-deoxyadenosine + 2 L-methionine + 2 reduced [2Fe-2S]-[ferredoxin]. It functions in the pathway protein modification; protein lipoylation via endogenous pathway; protein N(6)-(lipoyl)lysine from octanoyl-[acyl-carrier-protein]: step 2/2. Catalyzes the radical-mediated insertion of two sulfur atoms into the C-6 and C-8 positions of the octanoyl moiety bound to the lipoyl domains of lipoate-dependent enzymes, thereby converting the octanoylated domains into lipoylated derivatives. The polypeptide is Lipoyl synthase (Pseudoalteromonas translucida (strain TAC 125)).